Here is a 359-residue protein sequence, read N- to C-terminus: Serpentine receptor class epsilon-13 (359 aa).

7 helical membrane-spanning segments follow: residues Tyr-33–Leu-53, Ala-74–Ile-94, Ile-111–Ala-131, Trp-150–Phe-170, Val-180–Leu-200, Leu-237–Leu-257, and Leu-266–Ile-286.

The protein belongs to the nematode receptor-like protein sre family.

It is found in the membrane. This is Serpentine receptor class epsilon-13 (sre-13) from Caenorhabditis elegans.